The chain runs to 231 residues: Transmembrane protein 225 (231 aa).

The Cytoplasmic portion of the chain corresponds to 1 to 13 (MMRIPNRSIQAAN). Residues 14–34 (IFFSSGAILLLIAGLIMENWV) form a helical membrane-spanning segment. Over 35–71 (ELIPKVRKDKVTHSPWLGCCPPFWPEESLEAIRRMMM) the chain is Extracellular. Residues 72–92 (MSLNISIYLNLIIGLQFTYMI) form a helical membrane-spanning segment. Topologically, residues 93 to 99 (SQNKCVH) are cytoplasmic. Residues 100–120 (LLIGFLSFFTGCLLFYAIIVY) form a helical membrane-spanning segment. The Extracellular segment spans residues 121-139 (HHKLNKGQYVYFVNYKTKW). A helical transmembrane segment spans residues 140–160 (IVFTIYLTIALFLTCGIFSFI). Residues 161–231 (QCTNRCACMK…LQSRRVTWAL (71 aa)) lie on the Cytoplasmic side of the membrane. The RVxF signature appears at 225-229 (RRVTW).

Interacts (via RVxF motif) with PPP1CC. In terms of tissue distribution, expressed in testis, specifically in spermatocytes and round spermatids.

It localises to the cytoplasmic vesicle. Its subcellular location is the secretory vesicle. It is found in the acrosome membrane. In terms of biological role, probably inhibits protein phosphatase 1 (PP1) in sperm via binding to catalytic subunit PPP1CC. This Rattus norvegicus (Rat) protein is Transmembrane protein 225 (Tmem225).